Consider the following 408-residue polypeptide: Succinylornithine transaminase (408 aa).

Lysine 252 is modified (N6-(pyridoxal phosphate)lysine).

This sequence belongs to the class-III pyridoxal-phosphate-dependent aminotransferase family. AstC subfamily. It depends on pyridoxal 5'-phosphate as a cofactor.

It carries out the reaction N(2)-succinyl-L-ornithine + 2-oxoglutarate = N-succinyl-L-glutamate 5-semialdehyde + L-glutamate. Its pathway is amino-acid degradation; L-arginine degradation via AST pathway; L-glutamate and succinate from L-arginine: step 3/5. Catalyzes the transamination of N(2)-succinylornithine and alpha-ketoglutarate into N(2)-succinylglutamate semialdehyde and glutamate. Can also act as an acetylornithine aminotransferase. This Salmonella agona (strain SL483) protein is Succinylornithine transaminase.